Consider the following 125-residue polypeptide: Small ribosomal subunit protein bS6 (125 aa).

This sequence belongs to the bacterial ribosomal protein bS6 family.

Its function is as follows. Binds together with bS18 to 16S ribosomal RNA. The protein is Small ribosomal subunit protein bS6 of Campylobacter jejuni subsp. jejuni serotype O:23/36 (strain 81-176).